An 89-amino-acid chain; its full sequence is Small ribosomal subunit protein uS15 (89 aa).

The protein belongs to the universal ribosomal protein uS15 family. As to quaternary structure, part of the 30S ribosomal subunit. Forms a bridge to the 50S subunit in the 70S ribosome, contacting the 23S rRNA.

Functionally, one of the primary rRNA binding proteins, it binds directly to 16S rRNA where it helps nucleate assembly of the platform of the 30S subunit by binding and bridging several RNA helices of the 16S rRNA. In terms of biological role, forms an intersubunit bridge (bridge B4) with the 23S rRNA of the 50S subunit in the ribosome. The protein is Small ribosomal subunit protein uS15 of Aeromonas hydrophila subsp. hydrophila (strain ATCC 7966 / DSM 30187 / BCRC 13018 / CCUG 14551 / JCM 1027 / KCTC 2358 / NCIMB 9240 / NCTC 8049).